The following is a 162-amino-acid chain: Inorganic pyrophosphatase (162 aa).

Position 8 (glutamate 8) interacts with Mg(2+). Substrate is bound by residues lysine 16, arginine 30, and tyrosine 42. The Mg(2+) site is built by aspartate 52, aspartate 57, aspartate 84, and aspartate 89. Residue aspartate 89 is the Proton acceptor of the active site. Tyrosine 126 serves as a coordination point for substrate.

The protein belongs to the PPase family. As to quaternary structure, homohexamer. Mg(2+) is required as a cofactor.

The protein localises to the cytoplasm. It carries out the reaction diphosphate + H2O = 2 phosphate + H(+). Its function is as follows. Catalyzes the hydrolysis of inorganic pyrophosphate (PPi) forming two phosphate ions. This chain is Inorganic pyrophosphatase, found in Mycobacterium bovis (strain ATCC BAA-935 / AF2122/97).